Consider the following 186-residue polypeptide: Ribosome maturation factor RimP (186 aa).

The protein belongs to the RimP family.

It localises to the cytoplasm. Required for maturation of 30S ribosomal subunits. The chain is Ribosome maturation factor RimP from Novosphingobium aromaticivorans (strain ATCC 700278 / DSM 12444 / CCUG 56034 / CIP 105152 / NBRC 16084 / F199).